Consider the following 254-residue polypeptide: Arginine transport ATP-binding protein ArgV (254 aa).

The region spanning 6–250 (IDAQQVCKNY…PKEQRTKDFL (245 aa)) is the ABC transporter domain. ATP is bound at residue 38–45 (GPSGSGKS).

This sequence belongs to the ABC transporter superfamily. As to quaternary structure, the complex is probably composed of two ATP-binding proteins (ArgV), two transmembrane proteins (ArgU) and a solute-binding protein (ArgT).

The protein resides in the cell membrane. The catalysed reaction is a polar amino acid(out) + ATP + H2O = a polar amino acid(in) + ADP + phosphate + H(+). It catalyses the reaction L-arginine(out) + ATP + H2O = L-arginine(in) + ADP + phosphate + H(+). In terms of biological role, part of the ABC transporter complex ArgTUV involved in L-arginine import. May also transport L-citrulline. Probably responsible for energy coupling to the transport system. This Corynebacterium glutamicum (strain ATCC 13032 / DSM 20300 / JCM 1318 / BCRC 11384 / CCUG 27702 / LMG 3730 / NBRC 12168 / NCIMB 10025 / NRRL B-2784 / 534) protein is Arginine transport ATP-binding protein ArgV.